The sequence spans 435 residues: Uracil permease (435 aa).

Helical transmembrane passes span Phe-17–Val-37, Gly-42–Ile-62, Ile-67–Thr-87, Gly-91–Ile-111, Ile-122–Thr-142, Leu-161–Leu-181, Leu-191–Leu-213, Val-234–Ile-254, Val-311–Gly-331, Leu-336–Ile-356, Asn-376–Ser-396, and Gly-399–Leu-419.

Belongs to the nucleobase:cation symporter-2 (NCS2) (TC 2.A.40) family.

Its subcellular location is the cell membrane. Its function is as follows. Transport of uracil in the cell. The protein is Uracil permease (pyrP) of Bacillus subtilis (strain 168).